A 282-amino-acid chain; its full sequence is Pantothenate synthetase (282 aa).

Position 30–37 (30–37) interacts with ATP; that stretch reads MGALHRGH. Residue His-37 is the Proton donor of the active site. A (R)-pantoate-binding site is contributed by Gln-61. Gln-61 contacts beta-alanine. Position 147–150 (147–150) interacts with ATP; it reads GEKD. Gln-153 serves as a coordination point for (R)-pantoate. 184-187 contacts ATP; the sequence is LSSR.

It belongs to the pantothenate synthetase family. As to quaternary structure, homodimer.

It is found in the cytoplasm. It catalyses the reaction (R)-pantoate + beta-alanine + ATP = (R)-pantothenate + AMP + diphosphate + H(+). It functions in the pathway cofactor biosynthesis; (R)-pantothenate biosynthesis; (R)-pantothenate from (R)-pantoate and beta-alanine: step 1/1. Functionally, catalyzes the condensation of pantoate with beta-alanine in an ATP-dependent reaction via a pantoyl-adenylate intermediate. This Rhizorhabdus wittichii (strain DSM 6014 / CCUG 31198 / JCM 15750 / NBRC 105917 / EY 4224 / RW1) (Sphingomonas wittichii) protein is Pantothenate synthetase.